Reading from the N-terminus, the 434-residue chain is Enolase (434 aa).

(2R)-2-phosphoglycerate is bound at residue Gln166. Glu208 (proton donor) is an active-site residue. The Mg(2+) site is built by Asp245, Glu290, and Asp317. Lys342, Arg371, Ser372, and Lys393 together coordinate (2R)-2-phosphoglycerate. Lys342 acts as the Proton acceptor in catalysis.

The protein belongs to the enolase family. Requires Mg(2+) as cofactor.

The protein resides in the cytoplasm. The protein localises to the secreted. It is found in the cell surface. It carries out the reaction (2R)-2-phosphoglycerate = phosphoenolpyruvate + H2O. Its pathway is carbohydrate degradation; glycolysis; pyruvate from D-glyceraldehyde 3-phosphate: step 4/5. In terms of biological role, catalyzes the reversible conversion of 2-phosphoglycerate (2-PG) into phosphoenolpyruvate (PEP). It is essential for the degradation of carbohydrates via glycolysis. The protein is Enolase of Caldicellulosiruptor bescii (strain ATCC BAA-1888 / DSM 6725 / KCTC 15123 / Z-1320) (Anaerocellum thermophilum).